The sequence spans 87 residues: Small cysteine-rich outer membrane protein omcA (87 aa).

The first 19 residues, 1 to 19 (MKKAVLLATVFCGVVGLTS), serve as a signal peptide directing secretion. C20 carries the N-palmitoyl cysteine lipid modification. C20 carries S-diacylglycerol cysteine lipidation.

As to quaternary structure, part of a disulfide cross-linked outer membrane complex (COMC) composed of the major outer membrane porin (MOMP), the small cysteine-rich protein (omcA) and the large cysteine-rich periplasmic protein (omcB). N-terminal amide-linked and S-diacylglycerol cysteine-linked to 16:0, 18:0, 15:0 branched, and 17:0 branched fatty acids (ratio 6:5:3:4) in the EB stage. The exact distribution of fatty acids has not been determined. In terms of processing, the N-terminus is blocked.

Its subcellular location is the cell outer membrane. In elementary bodies (EBs, the infectious stage, which is able to survive outside the host cell) provides the structural integrity of the outer envelope through disulfide cross-links with the large cysteine-rich periplasmic protein and the major outer membrane porin. It has been described in publications as the Sarkosyl-insoluble COMC (Chlamydia outer membrane complex), and serves as the functional equivalent of peptidoglycan. The protein is Small cysteine-rich outer membrane protein omcA (omcA) of Chlamydia psittaci (Chlamydophila psittaci).